Reading from the N-terminus, the 87-residue chain is DNA-directed RNA polymerase subunit omega (87 aa).

The protein belongs to the RNA polymerase subunit omega family. The RNAP catalytic core consists of 2 alpha, 1 beta, 1 beta' and 1 omega subunit. When a sigma factor is associated with the core the holoenzyme is formed, which can initiate transcription.

It catalyses the reaction RNA(n) + a ribonucleoside 5'-triphosphate = RNA(n+1) + diphosphate. Its function is as follows. Promotes RNA polymerase assembly. Latches the N- and C-terminal regions of the beta' subunit thereby facilitating its interaction with the beta and alpha subunits. This chain is DNA-directed RNA polymerase subunit omega, found in Alcanivorax borkumensis (strain ATCC 700651 / DSM 11573 / NCIMB 13689 / SK2).